Here is a 458-residue protein sequence, read N- to C-terminus: O-acetyltransferase dmxR13 (458 aa).

The tract at residues 211 to 231 is disordered; sequence ELARQISQPRPPPSSDGPPPP. Residues 219 to 231 are compositionally biased toward pro residues; it reads PRPPPSSDGPPPP.

Belongs to the trichothecene 3-O-acetyltransferase family.

It functions in the pathway secondary metabolite biosynthesis. In terms of biological role, O-acetyltransferase; part of the gene cluster that mediates the biosynthesis of the dimeric xanthones cryptosporioptides. The pathway begins with the synthesis of atrochrysone thioester by the polyketide synthase dmx-nrPKS. The atrochrysone carboxyl ACP thioesterase dmxR1 then breaks the thioester bond and releases the atrochrysone carboxylic acid from dmx-nrPKS. Atrochrysone carboxylic acid is decarboxylated by the decarboxylase dmxR15, and oxidized by the anthrone oxygenase dmxR16 to yield emodin. Emodin is then reduced to emodin hydroquinone by the oxidoreductase dmxR7. A-ring reduction by the short chain dehydrogenase dmxR18, dehydration by the scytalone dehydratase-like protein dmxR17 and probable spontaneous re-oxidation, results in overall deoxygenation to chrysophanol. Baeyer-Villiger oxidation by the Baeyer-Villiger monooxygenase (BVMO) dmxR6 then yields monodictylactone in equilibrium with monodictyphenone. In the case of the cryptosporioptides biosynthesis, monodictylactone is reduced at C-12 to an alcohol (by the short chain dehydrogenases dmxR12 or dmxR8) and hydroxylated at C-5 by dmxR9, yielding the electron-rich aromatic which could eliminate H(2)O to form the ortho-quinonemethide, followed by tautomerisation to paraquinone and complete the formal reduction to produce the 10-methylgroup. Conjugate addition of C-4a-OH to the resulting paraquinone by the monooxygenase dmxR10 then gives cyclohexadienone, which is then reduced at C-5 by the short chain dehydrogenase dmxR3 to give the dihydroxanthone. The 6,7-epoxide in the cryptosporioptides could be introduced by the cytochrome P450 monooxygenase dmxL3. The highly reducing PKS dmxL2 manufactures butyrate, which is further carboxylated by dmxL1 to form ethylmalonate. It is not yet clear whether the carboxylation occurs while the butyrate is attached to the ACP of dmxL2, but this unusual fungal metabolite could then be esterified to O-5 by the O-acetyltransferase dmxR13. Finally, dimerization performed by dmxR5 gives the observed dimers cryptosporioptides A, B and C as the final products of the pathway. The protein is O-acetyltransferase dmxR13 of Cryptosporiopsis sp. (strain 8999).